We begin with the raw amino-acid sequence, 742 residues long: Eukaryotic translation initiation factor 3 subunit B (742 aa).

The span at 1–10 (MAPSFDTLSE) shows a compositional bias: polar residues. The tract at residues 1-20 (MAPSFDTLSEQDLHEEEEEE) is disordered. The region spanning 40–126 (TFVVIDGLPI…HTLAVNKLMD (87 aa)) is the RRM domain. 5 WD repeats span residues 193 to 230 (AHWTQLFVQWSPKGTYLASVHPQGIQLWGGPAFSKLKQ), 232 to 290 (PHPF…RSFV), 304 to 345 (QPKK…LLGK), 515 to 558 (IEKK…EKPE), and 573 to 611 (VEHYGVTDVDWDPTGRYVVSSASVWTHSMENGWNLHTFA).

It belongs to the eIF-3 subunit B family. In terms of assembly, component of the eukaryotic translation initiation factor 3 (eIF-3) complex.

The protein localises to the cytoplasm. RNA-binding component of the eukaryotic translation initiation factor 3 (eIF-3) complex, which is involved in protein synthesis of a specialized repertoire of mRNAs and, together with other initiation factors, stimulates binding of mRNA and methionyl-tRNAi to the 40S ribosome. The eIF-3 complex specifically targets and initiates translation of a subset of mRNAs involved in cell proliferation. The protein is Eukaryotic translation initiation factor 3 subunit B (prt1) of Aspergillus terreus (strain NIH 2624 / FGSC A1156).